The following is a 239-amino-acid chain: Isoprenyl transferase (239 aa).

Residue aspartate 16 is part of the active site. Aspartate 16 is a binding site for Mg(2+). Substrate is bound by residues 17–20 (GNGR), tryptophan 21, arginine 29, histidine 33, and 61–63 (STE). Asparagine 64 (proton acceptor) is an active-site residue. Residues tryptophan 65, arginine 67, arginine 187, and 193–195 (RLS) contribute to the substrate site. Glutamate 206 contributes to the Mg(2+) binding site.

The protein belongs to the UPP synthase family. Homodimer. Mg(2+) serves as cofactor.

Catalyzes the condensation of isopentenyl diphosphate (IPP) with allylic pyrophosphates generating different type of terpenoids. The polypeptide is Isoprenyl transferase (Lactobacillus johnsonii (strain CNCM I-12250 / La1 / NCC 533)).